Consider the following 199-residue polypeptide: Large ribosomal subunit protein bL9 (199 aa).

Residues 153 to 199 are disordered; sequence KPVKASEKKGRRPRRDEEASDEQILAEENSVTEEAVSEEIQNSESEN.

This sequence belongs to the bacterial ribosomal protein bL9 family.

Functionally, binds to the 23S rRNA. The chain is Large ribosomal subunit protein bL9 from Treponema denticola (strain ATCC 35405 / DSM 14222 / CIP 103919 / JCM 8153 / KCTC 15104).